Consider the following 349-residue polypeptide: Thioredoxin reductase, mitochondrial (349 aa).

The N-terminal 30 residues, 1–30 (MLLVRNSTLGRLSSLRGFFRNINESNIFYR), are a transit peptide targeting the mitochondrion. Residues 41–44 (SGPA), 70–71 (IA), Q75, N84, V117, C175, D318, and 325–327 (RQA) each bind FAD. The cysteines at positions 172 and 175 are disulfide-linked.

The protein belongs to the class-II pyridine nucleotide-disulfide oxidoreductase family. Homodimer. FAD serves as cofactor.

The protein resides in the mitochondrion. The catalysed reaction is [thioredoxin]-dithiol + NADP(+) = [thioredoxin]-disulfide + NADPH + H(+). The chain is Thioredoxin reductase, mitochondrial (TRR1) from Kluyveromyces lactis (strain ATCC 8585 / CBS 2359 / DSM 70799 / NBRC 1267 / NRRL Y-1140 / WM37) (Yeast).